The following is a 35-amino-acid chain: Cytochrome b6-f complex subunit 7 (35 aa).

A helical transmembrane segment spans residues 9 to 27; it reads AGLSIVLTLVGVALGYGIL.

This sequence belongs to the PetM family. In terms of assembly, the 4 large subunits of the cytochrome b6-f complex are cytochrome b6, subunit IV (17 kDa polypeptide, PetD), cytochrome f and the Rieske protein, while the 4 small subunits are PetG, PetL, PetM and PetN. The complex functions as a dimer.

It localises to the cellular thylakoid membrane. Component of the cytochrome b6-f complex, which mediates electron transfer between photosystem II (PSII) and photosystem I (PSI), cyclic electron flow around PSI, and state transitions. The protein is Cytochrome b6-f complex subunit 7 of Synechococcus sp. (strain JA-3-3Ab) (Cyanobacteria bacterium Yellowstone A-Prime).